The chain runs to 443 residues: MEAYIRQKRASPGMVQASDLQINRPMSGMRSNSRELHAYDGPMQFISSPQNPDQILTNGSPGGINPVAMNTSRNHSNNMRSLSTINQEADLIEEISSHELEDEESSPVTVIEQHQQSASHSANSTQSQKPRARQHSFSDNLDEDDYTNRNVAGAAPVRPAGMASSPYKDATLDGSSNGTGNGTGGESEGDVIGNIDQFVMQPAPQGVLYKCRITRDRKGMDRGLFPIYYLHLERDYGKKIFLLGGRKRKKSKTSNYIVSCDPTDLSRNADGFCGKLRSNVFGTSFTVFDNGNKESTESPRLDLAVIIYDTNILGFKGPRNMTVILPGMTEDDQRVKISSADPKQQGILDLWKMKNMDNIVELHNKTPVWNDETQSYVLNFHGRVTQASVKNFQLVHDSDPEYIVMQFGRTSEDVFTMDYRYPLCAMQAFAIALSSFDGKIACE.

Disordered regions lie at residues 57 to 80 (TNGSPGGINPVAMNTSRNHSNNMR) and 98 to 191 (HELE…EGDV). A compositionally biased stretch (polar residues) spans 68 to 80 (AMNTSRNHSNNMR). Over residues 113–128 (QHQQSASHSANSTQSQ) the composition is skewed to low complexity. At Ser-136 the chain carries Phosphoserine. Gly residues predominate over residues 177–186 (NGTGNGTGGE).

This sequence belongs to the TUB family.

The protein resides in the cytoplasm. It is found in the nucleus. Its subcellular location is the cell projection. The protein localises to the cilium membrane. It localises to the rhabdomere. The sequence is that of Protein king tubby from Drosophila simulans (Fruit fly).